A 227-amino-acid chain; its full sequence is AN1-type zinc finger protein 3 (227 aa).

Residues 12–44 (PSLPPRCPCGFWGSSKTMNLCSKCFADFQKKQP) form an A20-type zinc finger. Residues Cys-18, Cys-20, Cys-32, and Cys-35 each coordinate Zn(2+). 2 disordered regions span residues 41 to 99 (KKQP…TEEC) and 113 to 151 (PTKR…RSKQ). Composition is skewed to low complexity over residues 49-59 (TPSTSNSQSDL) and 66-77 (SDNNNTSVTTPT). Polar residues-rich tracts occupy residues 78–96 (LSPS…SPST) and 113–127 (PTKR…SENE). Positions 135 to 148 (RLVENPERPEESGR) are enriched in basic and acidic residues. The AN1-type zinc-finger motif lies at 151–200 (QKSRRRCFQCQTKLELVQQELGSCRCGYVFCMLHRLPEQHDCTFDHMGRG). Residues Cys-157, Cys-160, Cys-174, Cys-176, Cys-181, His-184, His-190, and Cys-192 each contribute to the Zn(2+) site.

As to expression, expressed in testis.

The polypeptide is AN1-type zinc finger protein 3 (Zfand3) (Mus musculus (Mouse)).